The sequence spans 240 residues: Cytochrome c-551 (240 aa).

Positions 41, 44, 45, 128, 132, and 133 each coordinate heme c.

Binds 2 heme c groups per subunit.

The protein is Cytochrome c-551 of Rhodocyclus tenuis (Rhodospirillum tenue).